Here is a 1349-residue protein sequence, read N- to C-terminus: Periaxin (1349 aa).

Ser7 is subject to Phosphoserine. The PDZ domain maps to 16–99; that stretch reads LVEIIVETEA…YKVSFCLKRT (84 aa). The Nuclear export signal signature appears at 70-84; it reads VFFENFKYEDALRLL. Ser133 is modified (phosphoserine). 41 consecutive repeat copies span residues 402-406, 410-414, 418-422, 426-430, 431-435, 436-440, 444-448, 452-456, 457-461, 462-466, 467-471, 472-476, 477-481, 485-489, 493-497, 501-505, 506-510, 514-518, 519-523, 524-528, 532-536, 537-549, 553-557, 558-562, 563-567, 571-575, 576-580, 589-593, 594-598, 599-603, 612-616, 617-621, 622-626, 630-634, 635-639, 643-647, 648-652, 653-657, 661-665, 669-673, and 674-678. Positions 402–678 are 41 X 5 AA approximate tandem repeats of [LVMGIE]-[PSM]-[EDKA]-[LIVMA]-[AQKHPRT]; that may have a tripeptide spacer of [ALKD]-[IPV]-[KPH]; that stretch reads PPEVKVPKGP…APEVKLPKAP (277 aa). Ser794 and Ser974 each carry phosphoserine. Over residues 1207–1218 the composition is skewed to basic and acidic residues; sequence AKEGAEEGEKAK. Positions 1207 to 1349 are disordered; it reads AKEGAEEGEK…RMEGAQAAVI (143 aa). Positions 1232-1242 are enriched in low complexity; the sequence is SEAVSGEGSPS. 6 positions are modified to phosphoserine: Ser1236, Ser1240, Ser1242, Ser1289, Ser1295, and Ser1327.

This sequence belongs to the periaxin family. As to quaternary structure, homodimer (via PDZ domain). Interacts with SCN10A. Found in a complex with SCN10A. Interacts with DRP2. Identified in a dystroglycan complex that contains at least PRX, DRP2, UTRN, DMD and DAG1. Detected in a complex composed of at least EZR, AHNAK, PPL and PRX. Identified in a complex with EZR, AHNAK, BFSP1, BFSP2, ANK2, PLEC, VIM and spectrin. Detected in eye lens (at protein level).

The protein resides in the nucleus. It is found in the cytoplasm. The protein localises to the cell membrane. It localises to the cell junction. Its subcellular location is the adherens junction. Scaffolding protein that functions as part of a dystroglycan complex in Schwann cells, and as part of EZR and AHNAK-containing complexes in eye lens fiber cells. Required for the maintenance of the peripheral myelin sheath that is essential for normal transmission of nerve impulses and normal perception of sensory stimuli. Required for normal transport of MBP mRNA from the perinuclear to the paranodal regions. Required for normal remyelination after nerve injury. Required for normal elongation of Schwann cells and normal length of the internodes between the nodes of Ranvier. The demyelinated nodes of Ranvier permit saltatory transmission of nerve impulses; shorter internodes cause slower transmission of nerve impulses. Required for the formation of appositions between the abaxonal surface of the myelin sheath and the Schwann cell plasma membrane; the Schwann cell cytoplasm is restricted to regions between these appositions. Required for the formation of Cajal bands and of Schmidt-Lanterman incisures that correspond to short, cytoplasm-filled regions on myelinated nerves. Recruits DRP2 to the Schwann cell plasma membrane. Required for normal protein composition of the eye lens fiber cell plasma membrane and normal eye lens fiber cell morphology. The sequence is that of Periaxin (PRX) from Bos taurus (Bovine).